The following is a 286-amino-acid chain: 4-diphosphocytidyl-2-C-methyl-D-erythritol kinase (286 aa).

The active site involves K8. 92–102 (PVSAGLAGGST) contacts ATP. Residue D134 is part of the active site.

Belongs to the GHMP kinase family. IspE subfamily.

It catalyses the reaction 4-CDP-2-C-methyl-D-erythritol + ATP = 4-CDP-2-C-methyl-D-erythritol 2-phosphate + ADP + H(+). Its pathway is isoprenoid biosynthesis; isopentenyl diphosphate biosynthesis via DXP pathway; isopentenyl diphosphate from 1-deoxy-D-xylulose 5-phosphate: step 3/6. Catalyzes the phosphorylation of the position 2 hydroxy group of 4-diphosphocytidyl-2C-methyl-D-erythritol. In Caldicellulosiruptor bescii (strain ATCC BAA-1888 / DSM 6725 / KCTC 15123 / Z-1320) (Anaerocellum thermophilum), this protein is 4-diphosphocytidyl-2-C-methyl-D-erythritol kinase.